Reading from the N-terminus, the 184-residue chain is MAECPTDLINEMFLRLRATTLKKCRVLSKPCFSLIDSPEKRVIERSDSPPPPLGFNNHLLPLANAYDDDDEEEGNELKKSQARRNGVAKGEGNGNKVNGEAQEEVDDEEDDDDDASKGRGKHSRHVEVRRDCPYLDTVNRQVIIIDQFLMLRVPLATMRKRMRTGGRKAKAMEKYLKKVLKKSG.

Residues 1–46 enclose the F-box domain; the sequence is MAECPTDLINEMFLRLRATTLKKCRVLSKPCFSLIDSPEKRVIERS. Residues 68–126 form a disordered region; the sequence is DDDEEEGNELKKSQARRNGVAKGEGNGNKVNGEAQEEVDDEEDDDDDASKGRGKHSRHV. Low complexity predominate over residues 85–100; the sequence is NGVAKGEGNGNKVNGE. Over residues 101–114 the composition is skewed to acidic residues; that stretch reads AQEEVDDEEDDDDD.

The protein is Putative F-box protein At4g22420 of Arabidopsis thaliana (Mouse-ear cress).